Here is a 178-residue protein sequence, read N- to C-terminus: Caveolin-1 (178 aa).

The residue at position 2 (serine 2) is an N-acetylserine. Serine 2 carries the post-translational modification Phosphoserine. Positions 2 to 94 (SGGKYVDSEG…WKASFTTFTV (93 aa)) are required for homooligomerization. Topologically, residues 2-104 (SGGKYVDSEG…TKYWFYRLLS (103 aa)) are cytoplasmic. Lysine 5 carries the N6-acetyllysine; alternate modification. Residue lysine 5 forms a Glycyl lysine isopeptide (Lys-Gly) (interchain with G-Cter in ubiquitin); alternate linkage. Tyrosine 6 carries the phosphotyrosine modification. Residue serine 9 is modified to Phosphoserine. Position 14 is a phosphotyrosine; by ABL1 (tyrosine 14). Phosphotyrosine is present on tyrosine 25. Glycyl lysine isopeptide (Lys-Gly) (interchain with G-Cter in ubiquitin) cross-links involve residues lysine 26, lysine 39, lysine 47, and lysine 57. Residues 82 to 94 (DGIWKASFTTFTV) are interaction with CAVIN3. Residues 105–125 (ALFGIPMALIWGIYFAILSFL) constitute an intramembrane region (helical). The Cytoplasmic portion of the chain corresponds to 126-178 (HIWAVVPCIKSFLIEIQCISRVYSIYVHTFCDPLFEAIGKIFSSIRINMQKEI). Residues 131–142 (VPCIKSFLIEIQ) are interacts with SPRY1, SPRY2, SPRY3 and SPRY4. Residues cysteine 133, cysteine 143, and cysteine 156 are each lipidated (S-palmitoyl cysteine). Residues 149-160 (SIYVHTFCDPLF) are interacts with SPRY1, SPRY2, and SPRY4. The segment at 167–178 (FSSIRINMQKEI) is interacts with SPRY1, SPRY2, SPRY3 and SPRY4.

It belongs to the caveolin family. Homooligomer. Interacts with GLIPR2. Interacts with NOSTRIN. Interacts with SNAP25 and STX1A. Interacts (via the N-terminus) with DPP4; the interaction is direct. Interacts with CTNNB1, CDH1 and JUP. Interacts with PACSIN2; this interaction induces membrane tubulation. Interacts with SLC7A9. Interacts with BMX and BTK. Interacts with TGFBR1. Interacts with CAVIN3 (via leucine-zipper domain) in a cholesterol-sensitive manner. Interacts with CAVIN1. Interacts with EHD2 in a cholesterol-dependent manner. Forms a ternary complex with UBXN6 and VCP; mediates CAV1 targeting to lysosomes for degradation. Interacts with ABCG1; this interaction regulates ABCG1-mediated cholesterol efflux. Interacts with NEU3; this interaction enhances NEU3 sialidase activity within caveola. Interacts (via C-terminus) with SPRY1, SPRY2 (via C-terminus), SPRY3, and SPRY4. Interacts with IGFBP5; this interaction allows trafficking of IGFBP5 from the plasma membrane to the nucleus. Phosphorylated at Tyr-14 by ABL1 in response to oxidative stress. In terms of processing, ubiquitinated. Undergo monoubiquitination and multi- and/or polyubiquitination. Monoubiquitination of N-terminal lysines promotes integration in a ternary complex with UBXN6 and VCP which promotes oligomeric CAV1 targeting to lysosomes for degradation. Ubiquitinated by ZNRF1; leading to degradation and modulation of the TLR4-mediated immune response.

The protein localises to the golgi apparatus membrane. Its subcellular location is the cell membrane. The protein resides in the membrane. It is found in the caveola. It localises to the membrane raft. Its function is as follows. May act as a scaffolding protein within caveolar membranes. Forms a stable heterooligomeric complex with CAV2 that targets to lipid rafts and drives caveolae formation. Mediates the recruitment of CAVIN proteins (CAVIN1/2/3/4) to the caveolae. Interacts directly with G-protein alpha subunits and can functionally regulate their activity. Involved in the costimulatory signal essential for T-cell receptor (TCR)-mediated T-cell activation. Its binding to DPP4 induces T-cell proliferation and NF-kappa-B activation in a T-cell receptor/CD3-dependent manner. Recruits CTNNB1 to caveolar membranes and may regulate CTNNB1-mediated signaling through the Wnt pathway. Negatively regulates TGFB1-mediated activation of SMAD2/3 by mediating the internalization of TGFBR1 from membrane rafts leading to its subsequent degradation. Binds 20(S)-hydroxycholesterol (20(S)-OHC). The sequence is that of Caveolin-1 (CAV1) from Loxodonta africana (African elephant).